Consider the following 195-residue polypeptide: Imidazoleglycerol-phosphate dehydratase (195 aa).

It belongs to the imidazoleglycerol-phosphate dehydratase family.

Its subcellular location is the cytoplasm. It catalyses the reaction D-erythro-1-(imidazol-4-yl)glycerol 3-phosphate = 3-(imidazol-4-yl)-2-oxopropyl phosphate + H2O. It functions in the pathway amino-acid biosynthesis; L-histidine biosynthesis; L-histidine from 5-phospho-alpha-D-ribose 1-diphosphate: step 6/9. The chain is Imidazoleglycerol-phosphate dehydratase from Geobacillus sp. (strain WCH70).